The following is a 283-amino-acid chain: Daunorubicin resistance ABC transporter permease protein DrrB1 (283 aa).

The ABC transmembrane type-2 domain occupies 53–280 (VQLIDIVLMP…PLTMRLYRNK (228 aa)). 6 helical membrane passes run 58 to 78 (IVLMPLIFLLMFTYLFGGAFA), 85 to 105 (LQFYLPGVTVQAVVMMTVYTG), 150 to 170 (VFLGLLLGFRADGGFLGVVGA), 171 to 191 (MLVLIVFGFSVSWIFAALGVV), 198 to 218 (VSGTSMIVLYPLLFMSNIFVM), and 252 to 272 (FWDVGLVLCVSAGLVAVFAPL).

The protein belongs to the ABC-2 integral membrane protein family. In terms of assembly, the complex is probably composed of two ATP-binding proteins (DrrA1) and two transmembrane proteins (DrrB1).

It localises to the cell membrane. Part of the ABC transporter complex DrrA1B1 involved in daunorubicin efflux. Responsible for the translocation of the substrate across the membrane. Confers self-resistance to daunorubicin, an antibiotic produced by S.coeruleorubidus. This chain is Daunorubicin resistance ABC transporter permease protein DrrB1, found in Streptomyces coeruleorubidus.